The primary structure comprises 142 residues: Trafficking protein particle complex subunit 1 (142 aa).

The protein belongs to the TRAPP small subunits family. BET5 subfamily. Part of the multisubunit TRAPP (transport protein particle) complex.

It localises to the golgi apparatus. The protein resides in the cis-Golgi network. Its subcellular location is the endoplasmic reticulum. In terms of biological role, may play a role in vesicular transport from endoplasmic reticulum to Golgi. The sequence is that of Trafficking protein particle complex subunit 1 (trappc1-1) from Dictyostelium discoideum (Social amoeba).